The following is a 177-amino-acid chain: ATP-dependent protease subunit HslV (177 aa).

The active site involves Thr-6. The Na(+) site is built by Ser-162, Cys-165, and Thr-168.

Belongs to the peptidase T1B family. HslV subfamily. In terms of assembly, a double ring-shaped homohexamer of HslV is capped on each side by a ring-shaped HslU homohexamer. The assembly of the HslU/HslV complex is dependent on binding of ATP.

The protein localises to the cytoplasm. It carries out the reaction ATP-dependent cleavage of peptide bonds with broad specificity.. Its activity is regulated as follows. Allosterically activated by HslU binding. Functionally, protease subunit of a proteasome-like degradation complex believed to be a general protein degrading machinery. This chain is ATP-dependent protease subunit HslV, found in Desulforudis audaxviator (strain MP104C).